Here is a 132-residue protein sequence, read N- to C-terminus: Small ribosomal subunit protein uS8 (132 aa).

The protein belongs to the universal ribosomal protein uS8 family. In terms of assembly, part of the 30S ribosomal subunit. Contacts proteins S5 and S12.

Its function is as follows. One of the primary rRNA binding proteins, it binds directly to 16S rRNA central domain where it helps coordinate assembly of the platform of the 30S subunit. The polypeptide is Small ribosomal subunit protein uS8 (Exiguobacterium sibiricum (strain DSM 17290 / CCUG 55495 / CIP 109462 / JCM 13490 / 255-15)).